Consider the following 396-residue polypeptide: MQTTSIKTASGMYINYFFLGMVNIILASNMSSLTKQWNTDPTGISYVIAAIGFGKLLTYGISGVLSDKIGRKPLVVASAGIMAVFLVGIPLSPSYELAFVFALLAGVANSAMDAGTYPALTELFPSASGSANVLVKAFMSVGAALLPLLITFLADHSMFYGFAFYLPAAVYLLNIIYLSTLSFPKKHKKPTNSGQQESPVFLSEPVFQKEGTALIIIGFTSTALFTVSQIWLPSYAQKAAGLAESASVQLLSYYSIGSLASVLLLAVLLNRWVKPVFITLLYPIITLCTLAVMLTVHIPVVLDITAFFLGFSTAGVFQITITLMTELFWKRKGTVTGIVATASSLASILLPIATGLIAKAGGIAHIFIFDFGIAVIGTAAAAFLYYRYKKLTGAQA.

12 consecutive transmembrane segments (helical) span residues 8-28, 44-64, 73-93, 97-117, 133-153, 158-178, 213-233, 250-270, 276-296, 304-324, 338-358, and 363-383; these read TASG…ILAS, ISYV…ISGV, PLVV…PLSP, LAFV…AGTY, VLVK…ITFL, MFYG…IIYL, ALII…IWLP, LLSY…VLLN, VFIT…MLTV, ITAF…ITLM, IVAT…GLIA, and IAHI…AAAF.

This sequence belongs to the major facilitator superfamily.

It localises to the cell membrane. This is an uncharacterized protein from Bacillus subtilis (strain 168).